A 328-amino-acid chain; its full sequence is Glyoxylate reductase/hydroxypyruvate reductase (328 aa).

Serine 36 is subject to Phosphoserine. 83–84 (VG) is a binding site for substrate. NADP(+) contacts are provided by residues 162–164 (GRI), 185–188 (RQPR), serine 217, and isoleucine 243. Substrate is bound by residues arginine 245, aspartate 269, and 293–296 (HIGS). Histidine 293 functions as the Proton donor in the catalytic mechanism. NADP(+) is bound at residue glycine 295. Threonine 298 carries the phosphothreonine modification.

It belongs to the D-isomer specific 2-hydroxyacid dehydrogenase family. Homodimer.

The enzyme catalyses glycolate + NADP(+) = glyoxylate + NADPH + H(+). It carries out the reaction (R)-glycerate + NAD(+) = 3-hydroxypyruvate + NADH + H(+). It catalyses the reaction (R)-glycerate + NADP(+) = 3-hydroxypyruvate + NADPH + H(+). Enzyme with hydroxy-pyruvate reductase, glyoxylate reductase and D-glycerate dehydrogenase enzymatic activities. Reduces hydroxypyruvate to D-glycerate, glyoxylate to glycolate oxidizes D-glycerate to hydroxypyruvate. The chain is Glyoxylate reductase/hydroxypyruvate reductase (Grhpr) from Mus musculus (Mouse).